Reading from the N-terminus, the 917-residue chain is Probable dipeptidyl-aminopeptidase B (917 aa).

The segment at 1–75 (MTVGRRLNDE…KYRDDVEEDW (75 aa)) is disordered. Topologically, residues 1-93 (MTVGRRLNDE…NAKPSQRRTQ (93 aa)) are cytoplasmic. Residues 27–39 (DSSSTASVSLTLV) are compositionally biased toward low complexity. A compositionally biased stretch (polar residues) spans 40 to 49 (DGTNHTTAKP). Basic and acidic residues predominate over residues 57–69 (VSRDRYADEKYRD). The helical; Signal-anchor for type II membrane protein transmembrane segment at 94 to 114 (IVFWLLVALCVGGWAVAFLFF) threads the bilayer. Over 115–917 (VTSPGNTIST…KRVIRRLLHR (803 aa)) the chain is Vacuolar. Residues 124–133 (TTPDTGSGSP) are compositionally biased toward polar residues. The segment at 124–150 (TTPDTGSGSPDSDVIKPGSPPAGKKIP) is disordered. Residues N206, N302, and N354 are each glycosylated (N-linked (GlcNAc...) asparagine). S759 functions as the Charge relay system in the catalytic mechanism. N818 carries an N-linked (GlcNAc...) asparagine glycan. Active-site charge relay system residues include D836 and H869.

It belongs to the peptidase S9B family.

It is found in the vacuole membrane. It carries out the reaction Release of an N-terminal dipeptide, Xaa-Yaa-|-Zaa-, from a polypeptide, preferentially when Yaa is Pro, provided Zaa is neither Pro nor hydroxyproline.. Functionally, type IV dipeptidyl-peptidase which removes N-terminal dipeptides sequentially from polypeptides having unsubstituted N-termini provided that the penultimate residue is proline. In Arthroderma gypseum (strain ATCC MYA-4604 / CBS 118893) (Microsporum gypseum), this protein is Probable dipeptidyl-aminopeptidase B (DAPB).